The chain runs to 411 residues: 1-deoxy-D-xylulose 5-phosphate reductoisomerase (411 aa).

5 residues coordinate NADPH: Thr11, Gly12, Ser13, Ile14, and Asn124. A 1-deoxy-D-xylulose 5-phosphate-binding site is contributed by Lys125. Glu126 provides a ligand contact to NADPH. Residue Asp150 participates in Mn(2+) binding. The 1-deoxy-D-xylulose 5-phosphate site is built by Ser151, Glu152, Ser186, and His209. Glu152 serves as a coordination point for Mn(2+). Gly215 contacts NADPH. The 1-deoxy-D-xylulose 5-phosphate site is built by Ser222, Asn227, Lys228, and Glu231. Mn(2+) is bound at residue Glu231.

This sequence belongs to the DXR family. The cofactor is Mg(2+). Requires Mn(2+) as cofactor.

The enzyme catalyses 2-C-methyl-D-erythritol 4-phosphate + NADP(+) = 1-deoxy-D-xylulose 5-phosphate + NADPH + H(+). It participates in isoprenoid biosynthesis; isopentenyl diphosphate biosynthesis via DXP pathway; isopentenyl diphosphate from 1-deoxy-D-xylulose 5-phosphate: step 1/6. Its function is as follows. Catalyzes the NADPH-dependent rearrangement and reduction of 1-deoxy-D-xylulose-5-phosphate (DXP) to 2-C-methyl-D-erythritol 4-phosphate (MEP). This Psychrobacter sp. (strain PRwf-1) protein is 1-deoxy-D-xylulose 5-phosphate reductoisomerase.